A 235-amino-acid chain; its full sequence is Auracyanin-B (235 aa).

Positions 1–21 (MSWRGSGRSNFRSRSSSNGGS) are enriched in low complexity. 2 disordered regions span residues 1–27 (MSWRGSGRSNFRSRSSSNGGSTFSGGS) and 64–107 (ATPR…NVVN). Residues 1 to 56 (MSWRGSGRSNFRSRSSSNGGSTFSGGSAGGPPLIVMMGLAFGAGLIMLIVMIASNA) form the signal peptide. Residues 57–80 (TAGGFVAATPRPTATPRPTAAPAP) constitute a propeptide that is removed on maturation. Positions 69–86 (TATPRPTAAPAPTQPPAA) are enriched in pro residues. A compositionally biased stretch (low complexity) spans 87–100 (QPTTAPATQAANAP). One can recognise a Plastocyanin-like domain in the interval 111–235 (AQTVEVRAAP…GMKGTLTVTP (125 aa)). Cu cation is bound by residues H152, C217, H222, and M227.

The protein belongs to the multicopper oxidase family. The cofactor is Cu cation. Glycosylated.

It localises to the cell membrane. Its function is as follows. Probably a soluble electron acceptor for the integral membrane protein electron transfer alternative complex III (ACIII). This is Auracyanin-B from Chloroflexus aurantiacus (strain ATCC 29366 / DSM 635 / J-10-fl).